Here is a 203-residue protein sequence, read N- to C-terminus: Large ribosomal subunit protein uL13 (203 aa).

Ala-2 carries the N-acetylalanine modification. Citrulline is present on Arg-59. Ser-77 bears the Phosphoserine mark. Arg-140 carries the citrulline modification. Lys-191 carries the N6-acetyllysine modification.

This sequence belongs to the universal ribosomal protein uL13 family. In terms of assembly, component of the 60S ribosome. Component of the GAIT complex. Interacts with EIF4G1. Phosphorylation at Ser-77 upon interferon-gamma treatment in macrophages involves a DAPK1-DAPK3 kinase cascade and is causing release from the ribosome, association with the GAIT complex and subsequent involvement in transcript-selective translation inhibition. In terms of processing, citrullinated by PADI4.

It localises to the cytoplasm. Its function is as follows. Associated with ribosomes but is not required for canonical ribosome function and has extra-ribosomal functions. Component of the GAIT (gamma interferon-activated inhibitor of translation) complex which mediates interferon-gamma-induced transcript-selective translation inhibition in inflammation processes. Upon interferon-gamma activation and subsequent phosphorylation dissociates from the ribosome and assembles into the GAIT complex which binds to stem loop-containing GAIT elements in the 3'-UTR of diverse inflammatory mRNAs (such as ceruplasmin) and suppresses their translation. In the GAIT complex interacts with m7G cap-bound eIF4G at or near the eIF3-binding site and blocks the recruitment of the 43S ribosomal complex. Involved in methylation of rRNA. The polypeptide is Large ribosomal subunit protein uL13 (RPL13A) (Canis lupus familiaris (Dog)).